A 1386-amino-acid chain; its full sequence is Pleckstrin homology domain-containing family G member 2 (1386 aa).

Disordered stretches follow at residues 1–21 and 36–82; these read MPEGAQGLSLSKPSPSLGCGR and TAPA…PLPG. Composition is skewed to low complexity over residues 8–17 and 45–62; these read LSLSKPSPSL and SPRGSGSSTSLSTVGSEG. Residue Ser-90 is modified to Phosphoserine. The DH domain maps to 102-283; the sequence is RLERVAREIV…TAVAWYINDM (182 aa). One can recognise a PH domain in the interval 313–411; it reads ELVLEGAFRG…WIHCLQRLFF (99 aa). Disordered regions lie at residues 436–540, 554–612, 701–739, 790–815, and 829–859; these read KSKP…PSGT, GLRD…PSPL, EPAEAPATRRELFSGSNPGKLGEPPSGGKAGPEEDEEGV, ILEDSDLGGDSGSGKAGAPSSERTAS, and QQMQRAETRASANAPRRRPRVLAQPQPSPCL. At Thr-445 the chain carries Phosphothreonine. Residues Ser-450 and Ser-469 each carry the phosphoserine modification. Residues 592-603 are compositionally biased toward acidic residues; it reads SEEEEEEEEGLE. Ser-911 and Ser-1049 each carry phosphoserine. Disordered regions lie at residues 1037–1099 and 1162–1191; these read PVPK…PLPC and TSPKQGSLPDIQGPAAAPPLPEPSLTDTQV. Composition is skewed to polar residues over residues 1048-1059 and 1073-1086; these read ESPTNIPLTKQG and QPIQPLSWHGSSLD. Thr-1257 is modified (phosphothreonine). Phosphoserine occurs at positions 1261 and 1310. Disordered regions lie at residues 1291-1333 and 1367-1386; these read ARRQ…ARRL and TQESMGLHRAQGAPDAPFHM. Positions 1301-1317 are enriched in low complexity; the sequence is PAASRGSWSSAPTSRAS. The span at 1318-1330 shows a compositional bias: pro residues; the sequence is SPPPQPQPPPPPA.

Its function is as follows. May be a transforming oncogene with exchange activity for CDC42. May be a guanine-nucleotide exchange factor (GEF) for RAC1 and CDC42. Activated by the binding to subunits beta and gamma of the heterotrimeric guanine nucleotide-binding protein (G protein). Involved in the regulation of actin polymerization. This is Pleckstrin homology domain-containing family G member 2 (PLEKHG2) from Homo sapiens (Human).